A 312-amino-acid chain; its full sequence is Protoheme IX farnesyltransferase (312 aa).

Transmembrane regions (helical) follow at residues 34-54, 56-76, 119-139, 152-172, 179-199, 225-245, 247-267, and 283-303; these read LVIF…HPVL, FTAI…NMAL, ALVN…YVVI, IVIG…AATG, LLLF…LALF, ILLY…LGYF, WVYG…AINV, and LFAF…LDVL.

It belongs to the UbiA prenyltransferase family. Protoheme IX farnesyltransferase subfamily.

It is found in the cell inner membrane. It carries out the reaction heme b + (2E,6E)-farnesyl diphosphate + H2O = Fe(II)-heme o + diphosphate. Its pathway is porphyrin-containing compound metabolism; heme O biosynthesis; heme O from protoheme: step 1/1. Its function is as follows. Converts heme B (protoheme IX) to heme O by substitution of the vinyl group on carbon 2 of heme B porphyrin ring with a hydroxyethyl farnesyl side group. The protein is Protoheme IX farnesyltransferase of Nitrobacter hamburgensis (strain DSM 10229 / NCIMB 13809 / X14).